Here is a 444-residue protein sequence, read N- to C-terminus: CCA-adding enzyme (444 aa).

Residues Ser-57 and Arg-60 each contribute to the ATP site. CTP-binding residues include Ser-57 and Arg-60. Asp-69, Asp-71, and Asp-124 together coordinate Mg(2+). ATP is bound by residues His-147, Lys-168, and Tyr-177. CTP is bound by residues His-147, Lys-168, and Tyr-177.

The protein belongs to the tRNA nucleotidyltransferase/poly(A) polymerase family. Archaeal CCA-adding enzyme subfamily. As to quaternary structure, homodimer. Mg(2+) serves as cofactor.

It carries out the reaction a tRNA precursor + 2 CTP + ATP = a tRNA with a 3' CCA end + 3 diphosphate. The catalysed reaction is a tRNA with a 3' CCA end + 2 CTP + ATP = a tRNA with a 3' CCACCA end + 3 diphosphate. Catalyzes the addition and repair of the essential 3'-terminal CCA sequence in tRNAs without using a nucleic acid template. Adds these three nucleotides in the order of C, C, and A to the tRNA nucleotide-73, using CTP and ATP as substrates and producing inorganic pyrophosphate. tRNA 3'-terminal CCA addition is required both for tRNA processing and repair. Also involved in tRNA surveillance by mediating tandem CCA addition to generate a CCACCA at the 3' terminus of unstable tRNAs. While stable tRNAs receive only 3'-terminal CCA, unstable tRNAs are marked with CCACCA and rapidly degraded. In Methanococcus maripaludis (strain C7 / ATCC BAA-1331), this protein is CCA-adding enzyme.